The following is a 117-amino-acid chain: Replication initiation control protein YabA (117 aa).

The disordered stretch occupies residues 45 to 81 (NQHLRERLDQSDRDKSSETENDSAQKPGHSDIGEGHD). Composition is skewed to basic and acidic residues over residues 46-62 (QHLRERLDQSDRDKSSE) and 72-81 (GHSDIGEGHD). Positions 92, 94, 107, and 110 each coordinate Zn(2+).

Belongs to the YabA family. As to quaternary structure, homotetramer. Interacts with both DnaA and DnaN, acting as a bridge between these two proteins. Zn(2+) serves as cofactor.

It localises to the cytoplasm. Its subcellular location is the nucleoid. In terms of biological role, involved in control of chromosome replication initiation. Inhibits the cooperative binding of DnaA to the oriC region, thus negatively regulating initiation of chromosome replication. Inhibits the ability of DnaA-ATP to form a helix on DNA; does not disassemble preformed DnaA-DNA helices. Decreases the residence time of DnaA on the chromosome at its binding sites (oriC, replication forks and promoter-binding sites). Tethers DnaA to the replication machinery via the DNA polymerase beta sliding clamp subunit (dnaN). Associates with oriC and other DnaA targets on the chromosome in a DnaA-dependent manner. The protein is Replication initiation control protein YabA of Bacillus pumilus (strain SAFR-032).